A 173-amino-acid chain; its full sequence is Ribulose bisphosphate carboxylase small subunit, chloroplastic 3 (173 aa).

The N-terminal 49 residues, 1–49 (MASIPATVATVAQANMVAPFTGLKSNAAFPVTKKVNDFSTLPSNGGRVQ), are a transit peptide targeting the chloroplast.

This sequence belongs to the RuBisCO small chain family. Heterohexadecamer of 8 large and 8 small subunits.

The protein localises to the plastid. The protein resides in the chloroplast. Functionally, ruBisCO catalyzes two reactions: the carboxylation of D-ribulose 1,5-bisphosphate, the primary event in carbon dioxide fixation, as well as the oxidative fragmentation of the pentose substrate. Both reactions occur simultaneously and in competition at the same active site. Although the small subunit is not catalytic it is essential for maximal activity. This is Ribulose bisphosphate carboxylase small subunit, chloroplastic 3 from Flaveria pringlei.